Consider the following 472-residue polypeptide: Glutamyl-tRNA(Gln) amidotransferase subunit A (472 aa).

Residues Lys-69 and Ser-144 each act as charge relay system in the active site. Ser-168 serves as the catalytic Acyl-ester intermediate.

This sequence belongs to the amidase family. GatA subfamily. Heterotrimer of A, B and C subunits.

The catalysed reaction is L-glutamyl-tRNA(Gln) + L-glutamine + ATP + H2O = L-glutaminyl-tRNA(Gln) + L-glutamate + ADP + phosphate + H(+). Functionally, allows the formation of correctly charged Gln-tRNA(Gln) through the transamidation of misacylated Glu-tRNA(Gln) in organisms which lack glutaminyl-tRNA synthetase. The reaction takes place in the presence of glutamine and ATP through an activated gamma-phospho-Glu-tRNA(Gln). The sequence is that of Glutamyl-tRNA(Gln) amidotransferase subunit A from Sulfurisphaera tokodaii (strain DSM 16993 / JCM 10545 / NBRC 100140 / 7) (Sulfolobus tokodaii).